The following is a 626-amino-acid chain: MPSIARLPDNVANKISAGEVVQRPASVVKELLENAIDSGADRISVVIKDAGRELVRIIDNGRGMSRADALLSVERFATSKLRDVDDLDTLGTLGFRGEALASISSVSHFELRTRMTDAPVALRFRYEGGIAVEESEVQGEAGTSVSVRNLFYNVPARRKFLKSNATEYGHIFELVRSFSLAYPEIQWQLLNDDQELFNFRTSDMLERLDTFYGKGFADSLIEVGEENDYLSIRGYIGRPALQKRKKLDQYFFINRRPIQNRMLTQALQQAYAELLVERQAPFALLFLGIDPSRVDVNVHPAKLEVRFDDERSVRNMFYPVIKRAVTLHDFSPDLAAGGRTSQAGDDSASRGFTHAGGGGFRTLAFQEVPERAITTGELYGSYREGAFGSSRPAVPQPSHQEVMFPVPEVPAAREDISQLLRSSMHEGPEGAGVEPKGEEPKIWQLHNKYLICQIKTGLMIIDQHVAHERVLYERAVEVMESRVPNSQQLLFPQKVEFRPWEYEVFEEIKDDLYRLGFNLRSFGTRAVMIEGVPQDVRPGSEATIMQDMIAEYRENATRLRLERRDNLAKSYSCRNAIMAGQKLSMGEMRTLIDNLFATREPYSCPHGRPVIIKMTLTELDHMFGRS.

The protein belongs to the DNA mismatch repair MutL/HexB family.

This protein is involved in the repair of mismatches in DNA. It is required for dam-dependent methyl-directed DNA mismatch repair. May act as a 'molecular matchmaker', a protein that promotes the formation of a stable complex between two or more DNA-binding proteins in an ATP-dependent manner without itself being part of a final effector complex. The protein is DNA mismatch repair protein MutL of Chlorobium luteolum (strain DSM 273 / BCRC 81028 / 2530) (Pelodictyon luteolum).